The chain runs to 230 residues: Complex I assembly factor TMEM126B, mitochondrial (230 aa).

Phosphoserine is present on Ser34. Transmembrane regions (helical) follow at residues 72 to 92, 110 to 130, 141 to 161, and 199 to 219; these read IYQMATFGTTAGFSGIFSNFL, LATLPFLSTVVTDKLFVIDAL, VFRSSLIGIVCGVFYPSSLAF, and IPLVFQIMFGILNGLYHYAVF.

This sequence belongs to the TMEM126 family. In terms of assembly, part of the mitochondrial complex I assembly/MCIA complex that comprises at least the core subunits TMEM126B, NDUFAF1, ECSIT and ACAD9 and complement subunits such as COA1 and TMEM186. Associates with the intermediate 370 kDa subcomplex of incompletely assembled complex I. Interacts with TMEM70.

It is found in the mitochondrion membrane. As part of the MCIA complex, involved in the assembly of the mitochondrial complex I. Participates in constructing the membrane arm of complex I. The polypeptide is Complex I assembly factor TMEM126B, mitochondrial (Homo sapiens (Human)).